The following is a 416-amino-acid chain: Glutamyl-tRNA reductase (416 aa).

Substrate is bound by residues 49 to 52, Ser105, 110 to 112, and Gln116; these read TCNR and EPQ. Residue Cys50 is the Nucleophile of the active site. NADP(+) is bound at residue 185-190; sequence GAGETI.

The protein belongs to the glutamyl-tRNA reductase family. As to quaternary structure, homodimer.

It carries out the reaction (S)-4-amino-5-oxopentanoate + tRNA(Glu) + NADP(+) = L-glutamyl-tRNA(Glu) + NADPH + H(+). Its pathway is porphyrin-containing compound metabolism; protoporphyrin-IX biosynthesis; 5-aminolevulinate from L-glutamyl-tRNA(Glu): step 1/2. Catalyzes the NADPH-dependent reduction of glutamyl-tRNA(Glu) to glutamate 1-semialdehyde (GSA). In Shewanella baltica (strain OS185), this protein is Glutamyl-tRNA reductase.